A 635-amino-acid polypeptide reads, in one-letter code: Threonine--tRNA ligase (635 aa).

A TGS domain is found at 1-61 (MPIITLPDGN…EKDANIAIIT (61 aa)). A catalytic region spans residues 242-533 (DHRKIGKQLD…LTEEYAGVYP (292 aa)). 3 residues coordinate Zn(2+): Cys333, His384, and His510.

It belongs to the class-II aminoacyl-tRNA synthetase family. Homodimer. The cofactor is Zn(2+).

Its subcellular location is the cytoplasm. It carries out the reaction tRNA(Thr) + L-threonine + ATP = L-threonyl-tRNA(Thr) + AMP + diphosphate + H(+). Its function is as follows. Catalyzes the attachment of threonine to tRNA(Thr) in a two-step reaction: L-threonine is first activated by ATP to form Thr-AMP and then transferred to the acceptor end of tRNA(Thr). Also edits incorrectly charged L-seryl-tRNA(Thr). The protein is Threonine--tRNA ligase of Psychromonas ingrahamii (strain DSM 17664 / CCUG 51855 / 37).